The following is a 121-amino-acid chain: Spermidine export protein MdtJ (121 aa).

4 helical membrane passes run 1–21 (MYIYWILLGLAIATEITGTLS), 32–52 (GGFILMLVMISLSYIFLSFAV), 55–75 (IALGVAYALWEGIGILFITLF), and 82–102 (ESLSLMKIAGLTTLVAGIVLI).

Belongs to the drug/metabolite transporter (DMT) superfamily. Small multidrug resistance (SMR) (TC 2.A.7.1) family. MdtJ subfamily. Forms a complex with MdtI.

The protein resides in the cell inner membrane. Functionally, catalyzes the excretion of spermidine. This is Spermidine export protein MdtJ from Escherichia coli O139:H28 (strain E24377A / ETEC).